We begin with the raw amino-acid sequence, 366 residues long: Histidinol-phosphate aminotransferase (366 aa).

Lys-228 carries the N6-(pyridoxal phosphate)lysine modification.

This sequence belongs to the class-II pyridoxal-phosphate-dependent aminotransferase family. Histidinol-phosphate aminotransferase subfamily. In terms of assembly, homodimer. It depends on pyridoxal 5'-phosphate as a cofactor.

The catalysed reaction is L-histidinol phosphate + 2-oxoglutarate = 3-(imidazol-4-yl)-2-oxopropyl phosphate + L-glutamate. It functions in the pathway amino-acid biosynthesis; L-histidine biosynthesis; L-histidine from 5-phospho-alpha-D-ribose 1-diphosphate: step 7/9. This chain is Histidinol-phosphate aminotransferase, found in Corynebacterium glutamicum (strain ATCC 13032 / DSM 20300 / JCM 1318 / BCRC 11384 / CCUG 27702 / LMG 3730 / NBRC 12168 / NCIMB 10025 / NRRL B-2784 / 534).